Consider the following 206-residue polypeptide: Small ribosomal subunit protein uS4 (206 aa).

Residues 98–161 (RRLDNVVYRL…RSMELIKNNL (64 aa)) form the S4 RNA-binding domain.

This sequence belongs to the universal ribosomal protein uS4 family. Part of the 30S ribosomal subunit. Contacts protein S5. The interaction surface between S4 and S5 is involved in control of translational fidelity.

In terms of biological role, one of the primary rRNA binding proteins, it binds directly to 16S rRNA where it nucleates assembly of the body of the 30S subunit. Its function is as follows. With S5 and S12 plays an important role in translational accuracy. This Caldanaerobacter subterraneus subsp. tengcongensis (strain DSM 15242 / JCM 11007 / NBRC 100824 / MB4) (Thermoanaerobacter tengcongensis) protein is Small ribosomal subunit protein uS4.